The following is a 471-amino-acid chain: Putative multidrug resistance protein MdtD (471 aa).

Helical transmembrane passes span 12 to 32 (LWIVAFGFFMQSLDTTIVNTA), 49 to 69 (MVIVSYVLTVAVMLPASGWMA), 72 to 92 (IGVRNIFFTAIVLFTLGSLFC), 101 to 123 (LVMSRVLQGVGGAMMVPVGRLTV), 138 to 158 (FVTLPGQVGPLLGPALGGILV), 165 to 185 (WIFLINLPVGIVGAIATLWLM), 195 to 215 (FDIFGFVLLAAGMATLTLALD), 220 to 240 (LGISTLTLCLLIVIGIVSILW), 265 to 285 (IGLFGSFVGRLGSGMLPFMTP), 286 to 306 (VFLQIGLGFSPFHAGLMMIPM), 342 to 362 (LVFMAVALMGWYYVLPLVLFF), 393 to 413 (LLSMIMQLSMSVGVTVAGLLL), and 431 to 451 (VFLYTYLSMAVIIALPALIFA).

This sequence belongs to the major facilitator superfamily. TCR/Tet family.

The protein localises to the cell inner membrane. This chain is Putative multidrug resistance protein MdtD, found in Enterobacter sp. (strain 638).